Consider the following 98-residue polypeptide: Large ribosomal subunit protein uL23 (98 aa).

The protein belongs to the universal ribosomal protein uL23 family. Part of the 50S ribosomal subunit. Contacts protein L29, and trigger factor when it is bound to the ribosome.

In terms of biological role, one of the early assembly proteins it binds 23S rRNA. One of the proteins that surrounds the polypeptide exit tunnel on the outside of the ribosome. Forms the main docking site for trigger factor binding to the ribosome. The chain is Large ribosomal subunit protein uL23 from Streptococcus pyogenes serotype M1.